Here is a 682-residue protein sequence, read N- to C-terminus: Potassium-transporting ATPase ATP-binding subunit (682 aa).

A run of 5 helical transmembrane segments spans residues 15-35 (AALF…AKLA), 42-62 (SPVM…TASG), 66-86 (AGFG…GNFA), 233-253 (LTFL…GVTL), and 257-277 (LLIA…LPAI). D310 acts as the 4-aspartylphosphate intermediate in catalysis. ATP contacts are provided by residues D347, E351, 377–384 (FTAQTRMS), and K395. Mg(2+) is bound by residues D518 and D522. A run of 3 helical transmembrane segments spans residues 588 to 608 (FAIL…LNVM), 616 to 636 (AVLA…PLAL), and 662 to 682 (VLLP…VLGA).

It belongs to the cation transport ATPase (P-type) (TC 3.A.3) family. Type IA subfamily. As to quaternary structure, the system is composed of three essential subunits: KdpA, KdpB and KdpC.

It is found in the cell inner membrane. It catalyses the reaction K(+)(out) + ATP + H2O = K(+)(in) + ADP + phosphate + H(+). In terms of biological role, part of the high-affinity ATP-driven potassium transport (or Kdp) system, which catalyzes the hydrolysis of ATP coupled with the electrogenic transport of potassium into the cytoplasm. This subunit is responsible for energy coupling to the transport system and for the release of the potassium ions to the cytoplasm. This Xanthomonas axonopodis pv. citri (strain 306) protein is Potassium-transporting ATPase ATP-binding subunit.